A 550-amino-acid polypeptide reads, in one-letter code: Membrane protein insertase YidC (550 aa).

The helical transmembrane segment at 6 to 26 threads the bilayer; sequence NLLVIALLFVSFMIWQTWEQD. Disordered stretches follow at residues 28 to 54 and 111 to 132; these read APKPQVQQTTQTTTTAAGSAASQGVPA and QSGLTGRNGPDNPNNNKGRPLY. A compositionally biased stretch (low complexity) spans 30–52; sequence KPQVQQTTQTTTTAAGSAASQGV. A compositionally biased stretch (polar residues) spans 111-127; the sequence is QSGLTGRNGPDNPNNNK. A run of 4 helical transmembrane segments spans residues 346-366, 421-441, 459-479, and 500-520; these read KWIHSFLGNWGFSIIAITFIV, LGGCFPLLIQMPIFLALYYML, LSAQDPYYILPILMGATMFFI, and PVIFTVFFLWFPSGLVLYYIV.

The protein belongs to the OXA1/ALB3/YidC family. Type 1 subfamily. As to quaternary structure, interacts with the Sec translocase complex via SecD. Specifically interacts with transmembrane segments of nascent integral membrane proteins during membrane integration.

It localises to the cell inner membrane. Functionally, required for the insertion and/or proper folding and/or complex formation of integral membrane proteins into the membrane. Involved in integration of membrane proteins that insert both dependently and independently of the Sec translocase complex, as well as at least some lipoproteins. Aids folding of multispanning membrane proteins. This Cronobacter sakazakii (strain ATCC BAA-894) (Enterobacter sakazakii) protein is Membrane protein insertase YidC.